Reading from the N-terminus, the 638-residue chain is MSASSSGGSPRFPSCGKNGVTSLTQKKVLRAPCGAPSVTVTKSHKRGMKGDTVNVRRSVRVKTKNPPRCLEITPPSSEKLVSVMRLSDLSTEDDDSGHCKMNRYDKKIDSLMNAVGCLKSEVKMQKGERQMAKRFLEERKEELEEVAHELAETEHENTVLRHNIERMKEEKDYTILQKKHLQQEKECLMSKLVEAEMDGAAAAKQVMALKDTIGKLKTEKQMTCTDINTLARQKELLLQKLSTFEETNRTLRDLLREQHCKEDSERLMEQQGALLKRLAEADSEKARLLLLLQDKDKEVEELLQEIQCEKAQAKTASELSKSMESMRGHLQAQLRSKEAENSRLCMQIKNLERSGNQHKAEVEAIMEQLKELKQKGDRDKESLKKAIRAQKERAEKSEEYAEQLHVQLADKDLYVAEALSTLESWRSRYNQVVKDKGDLELEIIVLNDRVTDLVNQQQTLEEKMREDRDSLVERLHRQTAEYSAFKLENERLKASFAPMEDKLNQAHLEVQQLKASVKNYEGMIDNYKSQVMKTRLEADEVAAQLERCDKENKILKDEMNKEIEAARRQFQSQLADLQQLPDILKITEAKLAECQDQLQGYERKNIDLTAIISDLRSRVRDWQKGSHELTRAGARIPR.

Residue T73 is modified to Phosphothreonine. S76 is modified (phosphoserine; by TSSK4). Residues S87 and S90 each carry the phosphoserine modification. A Phosphothreonine modification is found at T91. S96 and S110 each carry phosphoserine. K119 participates in a covalent cross-link: Glycyl lysine isopeptide (Lys-Gly) (interchain with G-Cter in SUMO2). At S120 the chain carries Phosphoserine. Residues 125–198 adopt a coiled-coil conformation; that stretch reads QKGERQMAKR…MSKLVEAEMD (74 aa). Phosphothreonine is present on T212. 2 coiled-coil regions span residues 226-404 and 442-616; these read DINT…AEQL and EIIV…SDLR. S242 carries the phosphoserine modification. Residues 373–396 form a disordered region; the sequence is KQKGDRDKESLKKAIRAQKERAEK. A Phosphoserine modification is found at S613.

The protein belongs to the ODF2 family. As to quaternary structure, self-associates. Associates with microtubules and forms a fibrillar structure partially linked to the microtubule network. Interacts via its C-terminus with PLK1. Interacts with ODF1. Localized at the distal/subdistal appendages of mother centrioles. Interacts with MARK4; the interaction is required for localization of ODF2 to centrioles. Interacts with TSSK4. Interacts with AKNA. Interacts with QRICH2. Interacts with CFAP58. Interacts with BBOF1. Interacts with CCDC38. Interacts with CCDC42. Post-translationally, tyrosine phosphorylated. Phosphorylated on Ser-76 by TSSK4.

It localises to the cytoplasm. It is found in the cytoskeleton. Its subcellular location is the microtubule organizing center. The protein localises to the centrosome. The protein resides in the cell projection. It localises to the cilium. It is found in the centriole. Its subcellular location is the spindle pole. The protein localises to the flagellum. Its function is as follows. Seems to be a major component of sperm tail outer dense fibers (ODF). ODFs are filamentous structures located on the outside of the axoneme in the midpiece and principal piece of the mammalian sperm tail and may help to maintain the passive elastic structures and elastic recoil of the sperm tail. May have a modulating influence on sperm motility. Functions as a general scaffold protein that is specifically localized at the distal/subdistal appendages of mother centrioles. Component of the centrosome matrix required for the localization of PLK1 and NIN to the centrosomes. Required for the formation and/or maintenance of normal CETN1 assembly. This is Outer dense fiber protein 2 (ODF2) from Macaca fascicularis (Crab-eating macaque).